The following is a 101-amino-acid chain: Phosphoribosyl-AMP cyclohydrolase (101 aa).

Asp71 contributes to the Mg(2+) binding site. Residue Cys72 participates in Zn(2+) binding. 2 residues coordinate Mg(2+): Asp73 and Asp75. Zn(2+) contacts are provided by Cys88 and Cys95.

Belongs to the PRA-CH family. Homodimer. Mg(2+) is required as a cofactor. Zn(2+) serves as cofactor.

Its subcellular location is the cytoplasm. The catalysed reaction is 1-(5-phospho-beta-D-ribosyl)-5'-AMP + H2O = 1-(5-phospho-beta-D-ribosyl)-5-[(5-phospho-beta-D-ribosylamino)methylideneamino]imidazole-4-carboxamide. Its pathway is amino-acid biosynthesis; L-histidine biosynthesis; L-histidine from 5-phospho-alpha-D-ribose 1-diphosphate: step 3/9. Its function is as follows. Catalyzes the hydrolysis of the adenine ring of phosphoribosyl-AMP. This is Phosphoribosyl-AMP cyclohydrolase from Bacillus cereus (strain G9842).